Reading from the N-terminus, the 627-residue chain is DNA mismatch repair protein MutL (627 aa).

Residues 376–404 are disordered; sequence APASTNEVREGSAARAGNYQPPEPPSREA.

This sequence belongs to the DNA mismatch repair MutL/HexB family.

This protein is involved in the repair of mismatches in DNA. It is required for dam-dependent methyl-directed DNA mismatch repair. May act as a 'molecular matchmaker', a protein that promotes the formation of a stable complex between two or more DNA-binding proteins in an ATP-dependent manner without itself being part of a final effector complex. The sequence is that of DNA mismatch repair protein MutL from Aeromonas salmonicida (strain A449).